Here is a 1133-residue protein sequence, read N- to C-terminus: Early transcription factor large subunit homolog (1133 aa).

The 301-residue stretch at 52–352 (KGGRAFFPCD…PNGQPLQRQQ (301 aa)) folds into the Helicase ATP-binding domain. An ATP-binding site is contributed by 99–106 (WQTGTGKS). Residues 281-284 (DEIH) carry the DEAH box motif. The region spanning 524–724 (MMKDILSIIR…EGDKALRKHA (201 aa)) is the Helicase C-terminal domain.

Belongs to the DEAD box helicase family. DEAH subfamily.

The protein resides in the virion. It catalyses the reaction ATP + H2O = ADP + phosphate + H(+). In terms of biological role, putative initation factor. The polypeptide is Early transcription factor large subunit homolog (African swine fever virus (isolate Tick/South Africa/Pretoriuskop Pr4/1996) (ASFV)).